The following is a 333-amino-acid chain: Glycerol-3-phosphate dehydrogenase [NAD(P)+] (333 aa).

3 residues coordinate NADPH: Trp13, Lys33, and Lys108. Sn-glycerol 3-phosphate-binding residues include Lys108 and Gly138. NADPH is bound at residue Ser142. 5 residues coordinate sn-glycerol 3-phosphate: Lys193, Asp246, Ser256, Arg257, and Asn258. Catalysis depends on Lys193, which acts as the Proton acceptor. Arg257 provides a ligand contact to NADPH. The NADPH site is built by Val281 and Glu283.

It belongs to the NAD-dependent glycerol-3-phosphate dehydrogenase family.

It localises to the cytoplasm. It carries out the reaction sn-glycerol 3-phosphate + NAD(+) = dihydroxyacetone phosphate + NADH + H(+). The enzyme catalyses sn-glycerol 3-phosphate + NADP(+) = dihydroxyacetone phosphate + NADPH + H(+). It participates in membrane lipid metabolism; glycerophospholipid metabolism. Catalyzes the reduction of the glycolytic intermediate dihydroxyacetone phosphate (DHAP) to sn-glycerol 3-phosphate (G3P), the key precursor for phospholipid synthesis. This Bifidobacterium longum (strain DJO10A) protein is Glycerol-3-phosphate dehydrogenase [NAD(P)+].